The primary structure comprises 497 residues: Subtilisin-like protease CPC735_031240 (497 aa).

The first 16 residues, 1–16 (MKGVLSLSLLPLLAAP), serve as a signal peptide directing secretion. The propeptide occupies 17–136 (SPILVDTIHR…IEKDSEVHAW (120 aa)). The 92-residue stretch at 43–134 (SYIVVFKKNV…QYIEKDSEVH (92 aa)) folds into the Inhibitor I9 domain. Residues 146 to 452 (PWGLARVSHR…GGSSNYTAII (307 aa)) form the Peptidase S8 domain. Active-site charge relay system residues include Asp182 and His214. Residues Asn244 and Asn284 are each glycosylated (N-linked (GlcNAc...) asparagine). Ser380 (charge relay system) is an active-site residue. Asn447 carries an N-linked (GlcNAc...) asparagine glycan.

Belongs to the peptidase S8 family.

Its subcellular location is the secreted. Secreted subtilisin-like serine protease with keratinolytic activity that contributes to pathogenicity. The polypeptide is Subtilisin-like protease CPC735_031240 (Coccidioides posadasii (strain C735) (Valley fever fungus)).